The primary structure comprises 413 residues: NAD(P)H oxidoreductase RTN4IP1, mitochondrial (413 aa).

Residues M1–Y23 constitute a mitochondrion transit peptide. The interval A27–M52 is disordered. The segment covering L31–A40 has biased composition (polar residues). Residues G61–V405 form the Enoyl reductase (ER) domain. Residues S228, G230, V231, S251, Y269, G353, F355, H398, and R400 each contribute to the NADPH site.

The protein belongs to the zinc-containing alcohol dehydrogenase family. Quinone oxidoreductase subfamily.

It localises to the mitochondrion matrix. It catalyses the reaction a quinone + NADH + H(+) = a quinol + NAD(+). The enzyme catalyses a quinone + NADPH + H(+) = a quinol + NADP(+). It functions in the pathway cofactor biosynthesis; ubiquinone biosynthesis. Its function is as follows. NAD(P)H oxidoreductase. Involved in the ubiquinone biosynthetic pathway. In Drosophila melanogaster (Fruit fly), this protein is NAD(P)H oxidoreductase RTN4IP1, mitochondrial.